The primary structure comprises 66 residues: uncharacterized protein (66 aa).

Positions 1–20 (MIALAYLATVAIAAMVLAVA) are hydrophobic.

This is an uncharacterized protein from Streptomyces lividans.